Reading from the N-terminus, the 523-residue chain is Amino acid transporter protein 6 (523 aa).

The Cytoplasmic portion of the chain corresponds to 1-19; that stretch reads MLNVFGVSASMPDDSRSQK. Residues 20-40 form a helical membrane-spanning segment; it reads MGLLGAISYIVGNIVGSGIFI. At 41–51 the chain is on the extracellular side; that stretch reads TPTSIIENVNS. The chain crosses the membrane as a helical span at residues 52 to 72; it reads VGLSLAIWILAAFISMLGSFC. Topologically, residues 73–86 are cytoplasmic; that stretch reads YVELGTSIRLSGGD. The chain crosses the membrane as a helical span at residues 87–107; that stretch reads FAYLCFMKWYPVAFAFMCIGC. Residues 108 to 145 are Extracellular-facing; it reads TINYPATLAVQAQTFAEYVFRGAGVELDETSEFWAKKL. The helical transmembrane segment at 146–166 threads the bilayer; that stretch reads LGFSLIILLMFMNFFSLKTFV. At 167–173 the chain is on the cytoplasmic side; that stretch reads QRFSILA. A helical transmembrane segment spans residues 174 to 194; sequence SLAKIAATLLIIITGFYYLIF. The Extracellular segment spans residues 195 to 214; sequence KHWKQNLEEPFKGSNWNPGP. Residues 215-235 traverse the membrane as a helical segment; that stretch reads FVNALFAGLFSYDGWDILNFG. Residues 236–249 lie on the Cytoplasmic side of the membrane; that stretch reads AEEIENPKRTMPLS. Residues 250 to 270 form a helical membrane-spanning segment; it reads IIIGMTCIGVIYVAVNVAYSI. Over 271-290 the chain is Extracellular; the sequence is VLSPTEMIASNAVAIDFANK. An N-linked (GlcNAc...) asparagine glycan is attached at Asn289. Residues 291–311 form a helical membrane-spanning segment; sequence TLGAAAFVVPVMVAILLIGSL. Over 312–348 the chain is Cytoplasmic; it reads NSTMFSASRYLQAVSRQGHIPSAISGIAPNCDSPRVA. A helical transmembrane segment spans residues 349-369; that stretch reads LLVHILIAIAVSFLGDPDKLI. The Extracellular segment spans residues 370 to 404; the sequence is NYVAFAQWSQRAFTMSALLYLRIRGRPRHPDRIQL. Residues 405–425 traverse the membrane as a helical segment; that stretch reads PIIMPILFFLVCTSMVVISII. At 426 to 429 the chain is on the cytoplasmic side; sequence DDFK. Residues 430-450 traverse the membrane as a helical segment; the sequence is SSAVGLGILLGGLIIFIIFVW. Residues 451 to 523 are Extracellular-facing; it reads DRALPSSHTF…GNGQFKCTRM (73 aa). A glycan (N-linked (GlcNAc...) asparagine) is linked at Asn462. Positions 521-523 match the PDZ-binding motif motif; that stretch reads TRM.

Belongs to the amino acid-polyamine-organocation (APC) superfamily. Interacts (via PDZ-binding motif) with nfrl-1 (via PDZ 2 domain); the interaction with nrfl-1 is required to sequester aat-6 to the apical cell membrane of intestinal cells. As to expression, expressed at the apical cell membrane of intestinal cells.

It localises to the apical cell membrane. Its function is as follows. Amino acid transporter that mediates the uptake of the L-enantiomers of various amino acids, including L-glutamate. May play a role in promoting fertility. The sequence is that of Amino acid transporter protein 6 from Caenorhabditis elegans.